Reading from the N-terminus, the 389-residue chain is MADFKLADRLATLPPYLFAGIDKVKAEVAARGVDIISLGIGDPDMPTPDFIIEAMKKAVERPANHQYPSYVGMLEFRQEVANWYGRRFGVSLDPKTEVIGLIGSKEGIAHFPLAFVNPGDLVLVCTPNYPVYHIATGFVGGEVQFIPLVEENDYLPDLDAIPAATWDRAKMIFVNYPNNPTAATAPRAFYEKLIGICRKHNVIIAHDTAYTEVYYDENDKPMSILEVEGAKDVTIEFHSLSKTYNMTGWRVGMAVGNASLVAGLGKVKENVDSGIFQAVQEASIVALRDGDDFCRELRGIYRKRRDVVVAALNKVGIACRVPTAAFYIWAKVPAGYGSSAEFVTAVLEKTGVVLTPGNGFGTPGEGYFRISLTVDTDRLEEAVSRIANL.

Substrate contacts are provided by Y16 and G41. Pyridoxal 5'-phosphate contacts are provided by residues Y70, 104 to 105 (SK), Y129, N179, Y210, and 239 to 241 (SLS). Residues K105, Y129, and N179 each contribute to the substrate site. K242 is modified (N6-(pyridoxal phosphate)lysine). Residue R250 participates in pyridoxal 5'-phosphate binding. Substrate is bound at residue R369.

The protein belongs to the class-I pyridoxal-phosphate-dependent aminotransferase family. LL-diaminopimelate aminotransferase subfamily. As to quaternary structure, homodimer. Requires pyridoxal 5'-phosphate as cofactor.

It catalyses the reaction (2S,6S)-2,6-diaminopimelate + 2-oxoglutarate = (S)-2,3,4,5-tetrahydrodipicolinate + L-glutamate + H2O + H(+). It functions in the pathway amino-acid biosynthesis; L-lysine biosynthesis via DAP pathway; LL-2,6-diaminopimelate from (S)-tetrahydrodipicolinate (aminotransferase route): step 1/1. In terms of biological role, involved in the synthesis of meso-diaminopimelate (m-DAP or DL-DAP), required for both lysine and peptidoglycan biosynthesis. Catalyzes the direct conversion of tetrahydrodipicolinate to LL-diaminopimelate. The chain is LL-diaminopimelate aminotransferase from Nitratidesulfovibrio vulgaris (strain DSM 19637 / Miyazaki F) (Desulfovibrio vulgaris).